A 60-amino-acid chain; its full sequence is MSFFGLKRYSTPILKPMLPFFLGGAIVFYGTVKLRDAMMDSAEYRNDPRNPKAGKYGSDH.

Residues 13 to 32 (ILKPMLPFFLGGAIVFYGTV) traverse the membrane as a helical segment.

The protein belongs to the ATPase j subunit family. In terms of assembly, F-type ATPases have 2 components, CF(1) - the catalytic core - and CF(0) - the membrane proton channel. In yeast, the dimeric form of ATP synthase consists of 17 polypeptides: alpha, beta, gamma, delta, epsilon, 4 (B), 5 (OSCP), 6 (A), 8, 9 (C), d, E (Tim11), f, g, h, i/j and k.

The protein resides in the mitochondrion membrane. Its function is as follows. Mitochondrial membrane ATP synthase (F(1)F(0) ATP synthase or Complex V) produces ATP from ADP in the presence of a proton gradient across the membrane which is generated by electron transport complexes of the respiratory chain. F-type ATPases consist of two structural domains, F(1) - containing the extramembraneous catalytic core and F(0) - containing the membrane proton channel, linked together by a central stalk and a peripheral stalk. During catalysis, ATP synthesis in the catalytic domain of F(1) is coupled via a rotary mechanism of the central stalk subunits to proton translocation. Part of the complex F(0) domain. Minor subunit located with subunit a in the membrane. The protein is ATP synthase subunit J, mitochondrial (atp18) of Schizosaccharomyces pombe (strain 972 / ATCC 24843) (Fission yeast).